A 329-amino-acid chain; its full sequence is MTSPSDVEASTETVDRGSRRNQTNDNPSADLVRVYLNGIGKTALLNAEDEVELAQTIEVGLYAEYLLENSQEPLTRAMKRDLKVLVKEGRKARSHLLEANLRLVVSLAKRYTGRGMPLLDLIQEGNLGLIRAMEKFDYSKGFKFSTYATWWIRQAITRGMADQSRTIRLPVHLVEQVNKLSRIKREMYQQLGREATNEELAEESGIEESKIEMLLRQSRDPVSLDMPVGADEEAPLGDFIEDSEATDAESAVVASLRHSDIRTVLDTLEQREQDVIRLRYGLDDGVPRTLDQIGRQFGLSRERVRQIEREVMSKLRDGARAEKLRAYAQ.

Positions 1-12 (MTSPSDVEASTE) are enriched in polar residues. The interval 1–27 (MTSPSDVEASTETVDRGSRRNQTNDNP) is disordered. Positions 120-133 (DLIQEGNLGLIRAM) match the Polymerase core binding motif. The H-T-H motif DNA-binding region spans 290–309 (LDQIGRQFGLSRERVRQIER).

The protein belongs to the sigma-70 factor family.

Sigma factors are initiation factors that promote the attachment of RNA polymerase to specific initiation sites and are then released. This chain is RNA polymerase sigma factor SigB (sigB), found in Corynebacterium diphtheriae (strain ATCC 700971 / NCTC 13129 / Biotype gravis).